A 987-amino-acid polypeptide reads, in one-letter code: UPF0182 protein Lxx09300 (987 aa).

Transmembrane regions (helical) follow at residues 17 to 37 (VWTT…FAGL), 59 to 79 (AAIA…WVVI), 108 to 128 (RLAM…SAAS), 167 to 187 (VGFA…TCYL), 206 to 226 (VQIS…VWLD), 256 to 276 (AVLA…AFTG), and 283 to 303 (VGTA…PWAI). Disordered regions lie at residues 700–719 (RDDA…DPTL) and 886–947 (TAGD…ALQQ). A compositionally biased stretch (low complexity) spans 705–719 (TTPNDPTSSPTDPTL). Gly residues predominate over residues 897 to 932 (GGSGGGSSGDAGSSAGGGSSGGGGSSAGGSSSGSGS). The segment covering 933 to 947 (SGTQSNAALQRALQQ) has biased composition (low complexity).

Belongs to the UPF0182 family.

Its subcellular location is the cell membrane. The sequence is that of UPF0182 protein Lxx09300 from Leifsonia xyli subsp. xyli (strain CTCB07).